Here is a 210-residue protein sequence, read N- to C-terminus: Probable GTP-binding protein EngB (210 aa).

The EngB-type G domain maps to 27–201 (MGIEVAFAGR…HQKLDIWFSQ (175 aa)). GTP contacts are provided by residues 35 to 42 (GRSNAGKS), 62 to 66 (GRTQL), 80 to 83 (DLPG), 147 to 150 (TKAD), and 180 to 182 (FSV). Mg(2+) contacts are provided by Ser42 and Thr64.

The protein belongs to the TRAFAC class TrmE-Era-EngA-EngB-Septin-like GTPase superfamily. EngB GTPase family. Mg(2+) is required as a cofactor.

Its function is as follows. Necessary for normal cell division and for the maintenance of normal septation. This Photorhabdus laumondii subsp. laumondii (strain DSM 15139 / CIP 105565 / TT01) (Photorhabdus luminescens subsp. laumondii) protein is Probable GTP-binding protein EngB.